We begin with the raw amino-acid sequence, 539 residues long: GMP synthase [glutamine-hydrolyzing] (539 aa).

The 200-residue stretch at 4–203 folds into the Glutamine amidotransferase type-1 domain; it reads KILILDFGSQ…VHDICGCKSD (200 aa). The active-site Nucleophile is the Cys-82. Catalysis depends on residues His-177 and Glu-179. The GMPS ATP-PPase domain maps to 204–395; it reads WNMPDYIAEA…LGLPHDMVYR (192 aa). 231-237 is an ATP binding site; sequence SGGVDSS.

As to quaternary structure, homodimer.

The catalysed reaction is XMP + L-glutamine + ATP + H2O = GMP + L-glutamate + AMP + diphosphate + 2 H(+). It participates in purine metabolism; GMP biosynthesis; GMP from XMP (L-Gln route): step 1/1. In terms of biological role, catalyzes the synthesis of GMP from XMP. This is GMP synthase [glutamine-hydrolyzing] from Herminiimonas arsenicoxydans.